Consider the following 290-residue polypeptide: uncharacterized protein (290 aa).

An HTH lysR-type domain is found at 1–61 (MVMNMNHLHI…RDKHHGLMLT (61 aa)). A DNA-binding region (H-T-H motif) is located at residues 20–39 (ITEAAKELFISQPAVSKAIK).

It belongs to the LysR transcriptional regulatory family.

This is an uncharacterized protein from Bacillus subtilis (strain 168).